The primary structure comprises 376 residues: Phosphoserine aminotransferase (376 aa).

R46 is an L-glutamate binding site. Residues 80 to 81, F104, T150, D172, and Q195 contribute to the pyridoxal 5'-phosphate site; that span reads AT. N6-(pyridoxal phosphate)lysine is present on K196. 247 to 248 is a binding site for pyridoxal 5'-phosphate; the sequence is NT.

Belongs to the class-V pyridoxal-phosphate-dependent aminotransferase family. SerC subfamily. As to quaternary structure, homodimer. It depends on pyridoxal 5'-phosphate as a cofactor.

Its subcellular location is the cytoplasm. It catalyses the reaction O-phospho-L-serine + 2-oxoglutarate = 3-phosphooxypyruvate + L-glutamate. The enzyme catalyses 4-(phosphooxy)-L-threonine + 2-oxoglutarate = (R)-3-hydroxy-2-oxo-4-phosphooxybutanoate + L-glutamate. It participates in amino-acid biosynthesis; L-serine biosynthesis; L-serine from 3-phospho-D-glycerate: step 2/3. Its pathway is cofactor biosynthesis; pyridoxine 5'-phosphate biosynthesis; pyridoxine 5'-phosphate from D-erythrose 4-phosphate: step 3/5. Its function is as follows. Catalyzes the reversible conversion of 3-phosphohydroxypyruvate to phosphoserine and of 3-hydroxy-2-oxo-4-phosphonooxybutanoate to phosphohydroxythreonine. The polypeptide is Phosphoserine aminotransferase (Corynebacterium glutamicum (strain R)).